A 161-amino-acid chain; its full sequence is ATP synthase subunit b (161 aa).

The chain crosses the membrane as a helical span at residues 12 to 32 (IAFFLFVFFCMKYIWPNLISL).

This sequence belongs to the ATPase B chain family. F-type ATPases have 2 components, F(1) - the catalytic core - and F(0) - the membrane proton channel. F(1) has five subunits: alpha(3), beta(3), gamma(1), delta(1), epsilon(1). F(0) has three main subunits: a(1), b(2) and c(10-14). The alpha and beta chains form an alternating ring which encloses part of the gamma chain. F(1) is attached to F(0) by a central stalk formed by the gamma and epsilon chains, while a peripheral stalk is formed by the delta and b chains.

It is found in the cell membrane. Functionally, f(1)F(0) ATP synthase produces ATP from ADP in the presence of a proton or sodium gradient. F-type ATPases consist of two structural domains, F(1) containing the extramembraneous catalytic core and F(0) containing the membrane proton channel, linked together by a central stalk and a peripheral stalk. During catalysis, ATP synthesis in the catalytic domain of F(1) is coupled via a rotary mechanism of the central stalk subunits to proton translocation. Its function is as follows. Component of the F(0) channel, it forms part of the peripheral stalk, linking F(1) to F(0). This is ATP synthase subunit b from Wigglesworthia glossinidia brevipalpis.